A 423-amino-acid chain; its full sequence is Putative competence-damage inducible protein (423 aa).

This sequence belongs to the CinA family.

The sequence is that of Putative competence-damage inducible protein from Streptococcus pyogenes serotype M2 (strain MGAS10270).